The sequence spans 981 residues: Isoleucine--tRNA ligase (981 aa).

Positions 50 to 60 (PTTNGMPHVGH) match the 'HIGH' region motif. The 'KMSKS' region signature appears at 604-608 (KMSKS). K607 is an ATP binding site.

It belongs to the class-I aminoacyl-tRNA synthetase family. IleS type 2 subfamily. Monomer. The cofactor is Zn(2+).

The protein resides in the cytoplasm. It catalyses the reaction tRNA(Ile) + L-isoleucine + ATP = L-isoleucyl-tRNA(Ile) + AMP + diphosphate. Its function is as follows. Catalyzes the attachment of isoleucine to tRNA(Ile). As IleRS can inadvertently accommodate and process structurally similar amino acids such as valine, to avoid such errors it has two additional distinct tRNA(Ile)-dependent editing activities. One activity is designated as 'pretransfer' editing and involves the hydrolysis of activated Val-AMP. The other activity is designated 'posttransfer' editing and involves deacylation of mischarged Val-tRNA(Ile). The chain is Isoleucine--tRNA ligase from Pyrobaculum aerophilum (strain ATCC 51768 / DSM 7523 / JCM 9630 / CIP 104966 / NBRC 100827 / IM2).